Here is a 168-residue protein sequence, read N- to C-terminus: CASP-like protein 1U1 (168 aa).

Over M1–R6 the chain is Cytoplasmic. Residues A7–M27 form a helical membrane-spanning segment. Over A28–A49 the chain is Extracellular. The helical transmembrane segment at F50 to L70 threads the bilayer. Residues S71–W80 are Cytoplasmic-facing. Residues A81 to F101 traverse the membrane as a helical segment. Residues A102–R138 lie on the Extracellular side of the membrane. Residues V139 to T159 traverse the membrane as a helical segment. Residues K160–H168 are Cytoplasmic-facing.

It belongs to the Casparian strip membrane proteins (CASP) family. As to quaternary structure, homodimer and heterodimers.

Its subcellular location is the cell membrane. This chain is CASP-like protein 1U1, found in Oryza sativa subsp. japonica (Rice).